A 539-amino-acid polypeptide reads, in one-letter code: 2,3-dihydroxybenzoate-AMP ligase (539 aa).

Gly191 provides a ligand contact to ATP. Substrate is bound by residues 234–235 (HN) and Ser240. Residues Gly307, Val329, Asp413, Arg428, and Lys519 each contribute to the ATP site. Residue Lys519 coordinates substrate.

The protein belongs to the ATP-dependent AMP-binding enzyme family.

It is found in the cytoplasm. It catalyses the reaction 2,3-dihydroxybenzoate + holo-[ACP] + ATP = 2,3-dihydroxybenzoyl-[ACP] + AMP + diphosphate. The protein operates within siderophore biosynthesis; bacillibactin biosynthesis. Involved in the biosynthesis of the catecholic siderophore bacillibactin. Catalyzes the activation of the carboxylate group of 2,3-dihydroxy-benzoate (DHB), via ATP-dependent PPi exchange reactions, to the acyladenylate. The sequence is that of 2,3-dihydroxybenzoate-AMP ligase from Bacillus subtilis (strain 168).